Consider the following 321-residue polypeptide: Glucokinase (321 aa).

8 to 13 (GDVGGT) serves as a coordination point for ATP.

This sequence belongs to the bacterial glucokinase family.

It is found in the cytoplasm. It carries out the reaction D-glucose + ATP = D-glucose 6-phosphate + ADP + H(+). This chain is Glucokinase, found in Psychromonas ingrahamii (strain DSM 17664 / CCUG 51855 / 37).